Here is a 253-residue protein sequence, read N- to C-terminus: Polyhedrin (253 aa).

Major component of the virus occlusion bodies, which are large proteinaceous structures (polyhedra), that protect the virus from the outside environment for extended periods until they are ingested by insect larvae. This Orgyia pseudotsugata cypovirus (OpCPV) protein is Polyhedrin.